The chain runs to 681 residues: Transferrin (681 aa).

Positions 1-18 (MALKLLTLIALTCAAANA) are cleaved as a signal peptide. 2 Transferrin-like domains span residues 23–364 (YKLC…ERGH) and 371–676 (VRLC…DVIS). 2 cysteine pairs are disulfide-bonded: Cys26–Cys60 and Cys35–Cys51. Residues Asp75 and Tyr108 each contribute to the Fe(3+) site. Intrachain disulfides connect Cys132–Cys228, Cys181–Cys207, Cys204–Cys213, and Cys271–Cys284. Hydrogencarbonate-binding residues include Thr134, Arg138, Val140, and Gly141. Residue Asn218 is glycosylated (N-linked (GlcNAc...) asparagine). Tyr222 provides a ligand contact to Fe(3+). N-linked (GlcNAc...) asparagine glycosylation occurs at Asn355. Intrachain disulfides connect Cys374-Cys411 and Cys384-Cys402. Asn418 carries N-linked (GlcNAc...) asparagine glycosylation. 3 disulfide bridges follow: Cys478–Cys551, Cys506–Cys678, and Cys579–Cys596.

This sequence belongs to the transferrin family.

It localises to the secreted. Transferrins are iron binding transport proteins which bind Fe(3+) ion in association with the binding of an anion, usually bicarbonate. This transferrin binds only one Fe(3+) ion per protein molecule. The sequence is that of Transferrin from Manduca sexta (Tobacco hawkmoth).